The following is a 745-amino-acid chain: Probable copper-transporting ATPase PacS (745 aa).

The Cytoplasmic portion of the chain corresponds to 1–94 (MAQTINLQLE…PVFSAKLVTG (94 aa)). Residues 3–68 (QTINLQLEGM…AVERAGYHAR (66 aa)) enclose the HMA domain. A metal cation contacts are provided by C14 and C17. Residues 95–115 (LVISAVLFFGSLPMMLGVNIP) traverse the membrane as a helical segment. Over 116–125 (HFPHIFHDPW) the chain is Extracellular. The helical transmembrane segment at 126-145 (LQWLLATPVQFWSGAEFYRG) threads the bilayer. Residues 146 to 152 (AWKSVRT) are Cytoplasmic-facing. A helical membrane pass occupies residues 153–173 (RSATMDTLVALGTSAAYFYSV). The Extracellular portion of the chain corresponds to 174–193 (AITLFPQWLTSQGLAAHVYF). The chain crosses the membrane as a helical span at residues 194-214 (EAAAVVITLILLGRSLEQRAR). The Cytoplasmic portion of the chain corresponds to 215–342 (RETSAAIRKL…KAPIQHFVDR (128 aa)). A helical membrane pass occupies residues 343 to 365 (ITHWFVPTVIVVAIAAFCIWWLT). At 366–372 (TGNITLA) the chain is on the extracellular side. Residues 373–390 (VLTLVEVLIIACPCALGL) form a helical membrane-spanning segment. Residues 391–543 (ATPTSVMVGT…QAQQWEKEQK (153 aa)) lie on the Cytoplasmic side of the membrane. Residue D428 is the 4-aspartylphosphate intermediate of the active site. A helical transmembrane segment spans residues 544 to 564 (TVIWLAVDTEVKALLAIADAI). Residues 565–687 (KPSSPQVVQA…KLSRATMGNI (123 aa)) are Extracellular-facing. Mg(2+)-binding residues include D633 and D637. The chain crosses the membrane as a helical span at residues 688-707 (RQNLFFAFIYNVIGIPVAAG). The Cytoplasmic portion of the chain corresponds to 708–719 (LFYPLFGLLLNP). The chain crosses the membrane as a helical span at residues 720 to 738 (ILAGAAMAFSSVSVVTNAL). Residues 739 to 745 (RLKKFCP) lie on the Extracellular side of the membrane.

The protein belongs to the cation transport ATPase (P-type) (TC 3.A.3) family. Type IB subfamily.

The protein resides in the cell membrane. The enzyme catalyses Cu(+)(in) + ATP + H2O = Cu(+)(out) + ADP + phosphate + H(+). Functionally, may play a role in the osmotic adaptation. In Synechocystis sp. (strain ATCC 27184 / PCC 6803 / Kazusa), this protein is Probable copper-transporting ATPase PacS (pacS).